Here is a 158-residue protein sequence, read N- to C-terminus: Large ribosomal subunit protein bL21 (158 aa).

The segment at 127 to 158 (TQETKSAASVKKAAKKSAPQKQAAVASNSKED) is disordered. Residues 131 to 158 (KSAASVKKAAKKSAPQKQAAVASNSKED) show a composition bias toward low complexity.

This sequence belongs to the bacterial ribosomal protein bL21 family. Part of the 50S ribosomal subunit. Contacts protein L20.

This protein binds to 23S rRNA in the presence of protein L20. In Bartonella henselae (strain ATCC 49882 / DSM 28221 / CCUG 30454 / Houston 1) (Rochalimaea henselae), this protein is Large ribosomal subunit protein bL21.